Reading from the N-terminus, the 271-residue chain is MKTIVLKLGGELVHAPELDVIARDLRVLVDGFNRVAIVHGGGPQASALQKTLGLETRMVAGRRYTDAQTLEVMKYVVAGQLNVDLCGRLLANGVMGVGLHGASGHVVQARRRPPRVMKGAGPEPVDLGLVGDVLGFNLPLLGDLFERRYVPVIACLGCDAQGQALNINGDTVASQLAGALEADALVLVTSTPGVLRDVNDPSSRIPHITHAEFERMVADGTISGGMIPKLEESFAVLDSGAKSVVIVGKLGEGDLAHAVLNPGSAGTVLVG.

Substrate-binding positions include 41 to 42 (GG), Arg63, and Asn166.

Belongs to the acetylglutamate kinase family. ArgB subfamily.

The protein localises to the cytoplasm. The catalysed reaction is N-acetyl-L-glutamate + ATP = N-acetyl-L-glutamyl 5-phosphate + ADP. Its pathway is amino-acid biosynthesis; L-arginine biosynthesis; N(2)-acetyl-L-ornithine from L-glutamate: step 2/4. Functionally, catalyzes the ATP-dependent phosphorylation of N-acetyl-L-glutamate. The polypeptide is Acetylglutamate kinase (Anaeromyxobacter sp. (strain Fw109-5)).